Here is a 763-residue protein sequence, read N- to C-terminus: Glycerophosphodiester phosphodiesterase GDPDL1 (763 aa).

An N-terminal signal peptide occupies residues Met1 to Ala35. Residues Gln36–Gln744 lie on the Extracellular side of the membrane. Positions Pro50–Val350 constitute a GP-PDE 1 domain. Asn105, Asn192, Asn248, Asn257, Asn315, Asn359, Asn430, Asn534, Asn547, and Asn654 each carry an N-linked (GlcNAc...) asparagine glycan. The GP-PDE 2 domain occupies Phe366 to Lys668. A helical membrane pass occupies residues Thr745–Leu762. A topological domain (cytoplasmic) is located at residue Leu763.

This sequence belongs to the glycerophosphoryl diester phosphodiesterase family. The cofactor is Ca(2+). In terms of tissue distribution, expressed in rosette and cauline leaves, stems, flowers and siliques.

The protein localises to the cell membrane. It carries out the reaction a sn-glycero-3-phosphodiester + H2O = an alcohol + sn-glycerol 3-phosphate + H(+). Its function is as follows. Hydrolyzes glycerolphosphoglycerol, glycerophosphocholine and glycerophosphoethanolamine in vitro. The polypeptide is Glycerophosphodiester phosphodiesterase GDPDL1 (Arabidopsis thaliana (Mouse-ear cress)).